The chain runs to 78 residues: Large ribosomal subunit protein bL28 (78 aa).

The disordered stretch occupies residues 1-20; that stretch reads MSRVCQVTSKRPAVGNNRSH.

The protein belongs to the bacterial ribosomal protein bL28 family.

This Haemophilus ducreyi (strain 35000HP / ATCC 700724) protein is Large ribosomal subunit protein bL28.